A 294-amino-acid chain; its full sequence is Bifunctional protein FolD 1 (294 aa).

NADP(+)-binding positions include 165-167, Ser190, and Thr231; that span reads GRS.

This sequence belongs to the tetrahydrofolate dehydrogenase/cyclohydrolase family. Homodimer.

It catalyses the reaction (6R)-5,10-methylene-5,6,7,8-tetrahydrofolate + NADP(+) = (6R)-5,10-methenyltetrahydrofolate + NADPH. The enzyme catalyses (6R)-5,10-methenyltetrahydrofolate + H2O = (6R)-10-formyltetrahydrofolate + H(+). The protein operates within one-carbon metabolism; tetrahydrofolate interconversion. Its function is as follows. Catalyzes the oxidation of 5,10-methylenetetrahydrofolate to 5,10-methenyltetrahydrofolate and then the hydrolysis of 5,10-methenyltetrahydrofolate to 10-formyltetrahydrofolate. This chain is Bifunctional protein FolD 1, found in Paenarthrobacter aurescens (strain TC1).